The following is a 249-amino-acid chain: NADH-quinone oxidoreductase subunit C (249 aa).

This sequence belongs to the complex I 30 kDa subunit family. As to quaternary structure, NDH-1 is composed of 14 different subunits. Subunits NuoB, C, D, E, F, and G constitute the peripheral sector of the complex.

The protein resides in the cell inner membrane. It catalyses the reaction a quinone + NADH + 5 H(+)(in) = a quinol + NAD(+) + 4 H(+)(out). NDH-1 shuttles electrons from NADH, via FMN and iron-sulfur (Fe-S) centers, to quinones in the respiratory chain. The immediate electron acceptor for the enzyme in this species is believed to be ubiquinone. Couples the redox reaction to proton translocation (for every two electrons transferred, four hydrogen ions are translocated across the cytoplasmic membrane), and thus conserves the redox energy in a proton gradient. The polypeptide is NADH-quinone oxidoreductase subunit C (Xylella fastidiosa (strain M12)).